We begin with the raw amino-acid sequence, 355 residues long: Heme A synthase (355 aa).

Transmembrane regions (helical) follow at residues 21-41, 85-102, 136-156, 173-193, 208-228, 264-284, 299-319, and 322-342; these read LARW…VGGI, INLG…FWEW, LFAL…MVAS, LLTA…LGAL, AIGV…VAGL, FLIH…LLLL, ALVI…VSGV, and WVAV…AAAL. H270 is a heme binding site. H327 lines the heme pocket.

It belongs to the COX15/CtaA family. Type 2 subfamily. Interacts with CtaB. Heme b serves as cofactor.

It is found in the cell membrane. It carries out the reaction Fe(II)-heme o + 2 A + H2O = Fe(II)-heme a + 2 AH2. The protein operates within porphyrin-containing compound metabolism; heme A biosynthesis; heme A from heme O: step 1/1. Functionally, catalyzes the conversion of heme O to heme A by two successive hydroxylations of the methyl group at C8. The first hydroxylation forms heme I, the second hydroxylation results in an unstable dihydroxymethyl group, which spontaneously dehydrates, resulting in the formyl group of heme A. This is Heme A synthase from Sphingopyxis alaskensis (strain DSM 13593 / LMG 18877 / RB2256) (Sphingomonas alaskensis).